The chain runs to 557 residues: Probable protein kinase UbiB (557 aa).

Residues 121–509 (AFDTTPLASA…RKLQTRVVTA (389 aa)) enclose the Protein kinase domain. Residues 127 to 135 (LASASIAQV) and lysine 154 each bind ATP. The active-site Proton acceptor is aspartate 289. The next 2 membrane-spanning stretches (helical) occupy residues 506-526 (VVTA…YGLH) and 535-555 (VPVW…IAWL).

It belongs to the ABC1 family. UbiB subfamily.

The protein resides in the cell inner membrane. Its pathway is cofactor biosynthesis; ubiquinone biosynthesis [regulation]. In terms of biological role, is probably a protein kinase regulator of UbiI activity which is involved in aerobic coenzyme Q (ubiquinone) biosynthesis. The protein is Probable protein kinase UbiB of Xanthomonas campestris pv. campestris (strain B100).